A 1891-amino-acid polypeptide reads, in one-letter code: Transcription initiation factor TFIID subunit 1 (1891 aa).

Disordered stretches follow at residues 1–34 (MGPG…AGGG), 154–180 (KLMP…GVSE), and 197–224 (ASEK…SESK). The 435-residue stretch at 1 to 435 (MGPGWAGLLQ…VTQLHWEDDI (435 aa)) folds into the Protein kinase 1 domain. Residues 156–165 (MPPPPPPPGP) are compositionally biased toward pro residues. The segment covering 197-208 (ASEKVDFSSSSD) has biased composition (low complexity). Ser328 carries the phosphoserine; by autocatalysis modification. Positions 535 to 556 (PDEKEEATSNSPSKENKKESSL) are disordered. Positions 538–997 (KEEATSNSPS…KIPNKPTQQK (460 aa)) are histone acetyltransferase (HAT). Lys565 carries the N6-acetyllysine modification. Residues Lys570 and Lys583 each participate in a glycyl lysine isopeptide (Lys-Gly) (interchain with G-Cter in SUMO2) cross-link. Disordered stretches follow at residues 990–1009 (PNKP…KKTV), 1128–1148 (MLQN…QERK), and 1254–1278 (RLKR…MKER). Composition is skewed to basic and acidic residues over residues 995-1004 (QQKDDKEPQP), 1139-1148 (SREREEQERK), and 1254-1270 (RLKR…PPEK). A DNA-binding region (HMG box) is located at residues 1216-1294 (VRIRTTKDEE…CGACGAIGHM (79 aa)). The interaction with ASF1A and ASF1B stretch occupies residues 1363–1650 (VLKFPKQQLP…TAKEAALEEA (288 aa)). The Nuclear localization signal signature appears at 1372–1379 (PPKKKRRV). Bromo domains lie at 1397-1505 (RRRT…LKEK) and 1519-1628 (LLDD…LTEY). In terms of domain architecture, Protein kinase 2 spans 1446–1891 (MDLQTLRENV…AGDTDLDSDE (446 aa)). 2 disordered regions span residues 1651-1676 (ELES…NNTS) and 1690-1891 (SNLS…DSDE). Over residues 1659–1668 (TPGPYTPQPP) the composition is skewed to pro residues. Phosphoserine is present on residues Ser1690 and Ser1693. The segment covering 1690–1708 (SNLSVLDIPSATSEKQLTQ) has biased composition (polar residues). 2 stretches are compositionally biased toward acidic residues: residues 1711–1723 (GDGD…EEEG) and 1741–1756 (EGED…EEGD). Residues 1764 to 1778 (LSESGSDSDVESGSL) show a composition bias toward low complexity. 3 positions are modified to phosphoserine: Ser1799, Ser1802, and Ser1820. The segment covering 1830-1840 (KSNTQDTSFSS) has biased composition (polar residues). A compositionally biased stretch (acidic residues) spans 1846–1855 (VSEEEEDEEE). At Ser1847 the chain carries Phosphoserine. Over residues 1858 to 1867 (SGPSVLSQVH) the composition is skewed to polar residues.

This sequence belongs to the TAF1 family. Component of the TFIID basal transcription factor complex, composed of TATA-box-binding protein TBP, and a number of TBP-associated factors (TAFs). TFIID consists of at least TBP, TAF1, TAF2, TAF3, TAF4, TAF5, TAF6, TAF7, TAF8, TAF9, TAF10, TAF11, TAF12 and TAF13. Interacts with TAF7; the interaction is direct. TAF1, when part of the TFIID complex, interacts with C-terminus of TP53. Part of a TFIID-containing RNA polymerase II pre-initiation complex that is composed of TBP and at least GTF2A1, GTF2A2, GTF2E1, GTF2E2, GTF2F1, GTF2H2, GTF2H3, GTF2H4, GTF2H5, GTF2B, TCEA1, ERCC2, ERCC3, TAF1, TAF2, TAF3, TAF4, TAF5, TAF6, TAF7, TAF8, TAF9, TAF10, TAF11, TAF12 and TAF13. Component of some MLL1/MLL complex, at least composed of the core components KMT2A/MLL1, ASH2L, HCFC1/HCF1, WDR5 and RBBP5, as well as the facultative components BACC1, CHD8, E2F6, HSP70, INO80C, KANSL1, LAS1L, MAX, MCRS1, MGA, KAT8/MOF, PELP1, PHF20, PRP31, RING2, RUVB1/TIP49A, RUVB2/TIP49B, SENP3, TAF1, TAF4, TAF6, TAF7, TAF9 and TEX10. RB1 interacts with the N-terminal domain of TAF1. Interacts with ASF1A and ASF1B. Interacts (via bromo domains) with acetylated lysine residues on the N-terminus of histone H1.4, H2A, H2B, H3 and H4 (in vitro). Mg(2+) is required as a cofactor. Post-translationally, phosphorylated by casein kinase II in vitro.

Its subcellular location is the nucleus. The enzyme catalyses L-seryl-[protein] + ATP = O-phospho-L-seryl-[protein] + ADP + H(+). It catalyses the reaction L-threonyl-[protein] + ATP = O-phospho-L-threonyl-[protein] + ADP + H(+). It carries out the reaction L-lysyl-[protein] + acetyl-CoA = N(6)-acetyl-L-lysyl-[protein] + CoA + H(+). Its activity is regulated as follows. Autophosphorylates on Ser residues. Inhibited by retinoblastoma tumor suppressor protein, RB1. Binding to TAF1 or CIITA inhibits the histone acetyltransferase activity. Functionally, the TFIID basal transcription factor complex plays a major role in the initiation of RNA polymerase II (Pol II)-dependent transcription. TFIID recognizes and binds promoters with or without a TATA box via its subunit TBP, a TATA-box-binding protein, and promotes assembly of the pre-initiation complex (PIC). The TFIID complex consists of TBP and TBP-associated factors (TAFs), including TAF1, TAF2, TAF3, TAF4, TAF5, TAF6, TAF7, TAF8, TAF9, TAF10, TAF11, TAF12 and TAF13. TAF1 is the largest component and core scaffold of the TFIID complex, involved in nucleating complex assembly. TAF1 forms a promoter DNA binding subcomplex of TFIID, together with TAF7 and TAF2. Contains novel N- and C-terminal Ser/Thr kinase domains which can autophosphorylate or transphosphorylate other transcription factors. Phosphorylates TP53 on 'Thr-55' which leads to MDM2-mediated degradation of TP53. Phosphorylates GTF2A1 and GTF2F1 on Ser residues. Possesses DNA-binding activity. Exhibits histone acetyltransferase activity towards histones H3 and H4. Essential for progression of the G1 phase of the cell cycle. The chain is Transcription initiation factor TFIID subunit 1 from Mus musculus (Mouse).